A 289-amino-acid polypeptide reads, in one-letter code: Syntaxin-3 (289 aa).

Over 1–263 (MKDRLEQLKA…VKYQSQARKK (263 aa)) the chain is Cytoplasmic. A coiled-coil region spans residues 32-111 (MDEFFSEIEE…IEEDEVRSSA (80 aa)). The t-SNARE coiled-coil homology domain maps to 191–253 (LSEIEGRHKD…EKARDETKKA (63 aa)). Residues 264–284 (LIIIIVLVVVLLGILALIIGL) traverse the membrane as a helical; Anchor for type IV membrane protein segment. Residues 285-289 (SVGLN) are Extracellular-facing.

The protein belongs to the syntaxin family. Interacts with REEP6. Interacts with PRPH2 in rod and cone photoreceptors. Interacts with ROM1. Interacts with SNAP25. Interacts with VAMP2. As to quaternary structure, interacts with IPO5. As to expression, expressed in small intestine, kidney, pancreas, placenta as well as in retina. Weaker expression in lung, liver and heart. Not expressed in brain and skeletal muscle. Expressed only in the retina. In terms of tissue distribution, ubiquitously expressed.

It localises to the apical cell membrane. The protein localises to the nucleus. In terms of biological role, potentially involved in docking of synaptic vesicles at presynaptic active zones. Apical receptor involved in membrane fusion of apical vesicles. Essential for survival of retinal photoreceetors. Functionally, functions as a regulator of gene expression. The chain is Syntaxin-3 (STX3) from Homo sapiens (Human).